The primary structure comprises 877 residues: Clumping factor B (877 aa).

Positions 1–44 are cleaved as a signal peptide; the sequence is MKKRIDYLSNKQNKYSIRRFTVGTTSVIVGATILFGIGNHQAQA. A YSIRK-G/S signaling motif motif is present at residues 15–26; that stretch reads YSIRRFTVGTTS. Composition is skewed to polar residues over residues 44–61 and 68–95; these read ASEQ…NASA and MIET…NVDS. Residues 44-192 are disordered; sequence ASEQSNDTTQ…QGTSKPSVRT (149 aa). A ligand binding A region region spans residues 45-542; that stretch reads SEQSNDTTQS…GSADGDSAVN (498 aa). Low complexity predominate over residues 96–119; sequence TTKPMSTQTSNTTTTEPASTNETP. Residues 120–189 show a composition bias toward polar residues; that stretch reads QPTAIKNQAT…SNAQGTSKPS (70 aa). The MIDAS-like motif motif lies at 272 to 276; it reads DYSNS. A disordered region spans residues 530 to 849; sequence YGGGSADGDS…ETGDKSENTN (320 aa). Residues 545–555 show a composition bias toward pro residues; the sequence is DPTPGPPVDPE. A compositionally biased stretch (acidic residues) spans 556 to 801; it reads PSPDPEPEPT…SDSDSDSDSD (246 aa). The span at 805-816 shows a compositional bias: polar residues; it reads RVTPPNNEQKAP. The span at 833–846 shows a compositional bias: basic and acidic residues; it reads HKTDALPETGDKSE. The LPXTG sorting signal motif lies at 838–842; sequence LPETG. At Thr-841 the chain carries Pentaglycyl murein peptidoglycan amidated threonine. The propeptide at 842–877 is removed by sortase; the sequence is GDKSENTNATLFGAMMALLGSLLLFRKRKQDHKEKA.

The protein belongs to the serine-aspartate repeat-containing protein (SDr) family. In terms of processing, proteolytically cleaved by aureolysin (aur). This cleavage leads to the inactivation of ClfB.

The protein localises to the secreted. Its subcellular location is the cell wall. Functionally, cell surface-associated protein implicated in virulence by promoting bacterial attachment to both alpha- and beta-chains of human fibrinogen and inducing the formation of bacterial clumps. This chain is Clumping factor B (clfB), found in Staphylococcus aureus (strain Mu50 / ATCC 700699).